Reading from the N-terminus, the 3225-residue chain is Intermembrane lipid transfer protein VPS13 (3225 aa).

An involved in phospholipid binding region spans residues 1–1390; sequence MLEGLVAGLL…VFAADVEQHT (1390 aa). Residues 2–115 form the Chorein N-terminal domain; sequence LEGLVAGLLN…RHRLKMEKLD (114 aa). Disordered stretches follow at residues 1568-1610 and 1768-1799; these read PEAP…QQLV and AGLKHRTASGKGTSTLATRTRHASQSAASHSG. Over residues 1590–1610 the composition is skewed to low complexity; that stretch reads VRVGSSGRHSESSAGSGQQLV. Polar residues predominate over residues 1777 to 1799; the sequence is GKGTSTLATRTRHASQSAASHSG. Residues 2290-2570 enclose the SHR-BD domain; that stretch reads FKVTVYSPYV…PYAWDFPAAK (281 aa).

It belongs to the VPS13 family.

The protein localises to the membrane. Its function is as follows. Mediates the transfer of lipids between membranes at organelle contact sites. Binds phospholipids, including phosphatidylcholine (PC), phosphatidylethanolamine (PE), phosphatidic acid (PA), and phosphatidylserine (PS). May play a role in mitochondrial lipid homeostasis, Golgi vesicle transport, reticulophagy, actin cytoskeleton organization and formation of the prospore membrane. The chain is Intermembrane lipid transfer protein VPS13 from Chaetomium thermophilum (strain DSM 1495 / CBS 144.50 / IMI 039719) (Thermochaetoides thermophila).